The chain runs to 561 residues: Embryonal Fyn-associated substrate (561 aa).

The region spanning 5 to 68 is the SH3 domain; sequence TSTQLARALY…PANRVKLLPA (64 aa). Disordered regions lie at residues 68–123, 171–215, 240–372, and 390–422; these read AGPA…CPPS, HPLT…PGPP, LADG…HNEY, and DKAQ…ALSP. Residues 103–123 show a composition bias toward pro residues; that stretch reads VPPPARPCPTSGPPAGPCPPS. Tyr253 bears the Phosphotyrosine; by SRC mark. 2 consecutive short sequence motifs (SH3-binding) follow at residues 305 to 311 and 335 to 341; these read RPLPALP and RPLPPPP. Residues 308 to 325 are compositionally biased toward pro residues; sequence PALPVPEAPSPSPVPSPA. Basic and acidic residues predominate over residues 352 to 372; that stretch reads VEGDPEGREMEDDPAGHHNEY. Positions 438-488 are divergent helix-loop-helix motif; sequence FYAGQCQSHYSALQAAVAALMSSTQANQPPRLFVPHSKRVVVAAHRLVFVG.

It belongs to the CAS family. In terms of processing, phosphorylated on multiple tyrosine residues. Phosphorylated on tyrosines by FYN and SRC. As to expression, the protein has been detected in lung and placenta.

Its function is as follows. Docking protein which plays a central coordinating role for tyrosine-kinase-based signaling related to cell adhesion. May serve as an activator of SRC and a downstream effector. Interacts with the SH3 domain of FYN and with CRK, SRC, and YES. This chain is Embryonal Fyn-associated substrate (EFS), found in Homo sapiens (Human).